The chain runs to 297 residues: 4-hydroxy-tetrahydrodipicolinate synthase (297 aa).

Threonine 49 lines the pyruvate pocket. Residue tyrosine 137 is the Proton donor/acceptor of the active site. Lysine 165 serves as the catalytic Schiff-base intermediate with substrate. A pyruvate-binding site is contributed by isoleucine 208.

The protein belongs to the DapA family. As to quaternary structure, homotetramer; dimer of dimers.

Its subcellular location is the cytoplasm. The catalysed reaction is L-aspartate 4-semialdehyde + pyruvate = (2S,4S)-4-hydroxy-2,3,4,5-tetrahydrodipicolinate + H2O + H(+). Its pathway is amino-acid biosynthesis; L-lysine biosynthesis via DAP pathway; (S)-tetrahydrodipicolinate from L-aspartate: step 3/4. Functionally, catalyzes the condensation of (S)-aspartate-beta-semialdehyde [(S)-ASA] and pyruvate to 4-hydroxy-tetrahydrodipicolinate (HTPA). The protein is 4-hydroxy-tetrahydrodipicolinate synthase of Gluconacetobacter diazotrophicus (strain ATCC 49037 / DSM 5601 / CCUG 37298 / CIP 103539 / LMG 7603 / PAl5).